The primary structure comprises 806 residues: MYNHNKIEKKWQKYWLDNKTFKFVDNPNNPKKFYVLDMFPYPSGKGLHVGHPKGYTATDVISRFKRLNGYDVLHPIGWDAFGLPAEQYALETNNHPHTFTQQNIKIFRKQLQMIGFDFDYDKEVDTTDPQFYQWTQWIFVQLYKHNLAEIQDIDVNWCENLGTVLSNEEVVLNDKNERVSERGGHPVVRKPMKQWVLKIVDYADKLLDGLNEVEFSESLKSLQRNWIGKSIGTNVQFKIKDSHLALDVFTTRIDTIYGAQYLVVAPEHPILKSIVSEQQASVVQAYVDQTKKISDLDRIADTNKTGVFSGTYAINPINQEIIPIWVSDYVLMNFATGAVMGVPAHDERDYAFAKKYDLPIKSVIDTKQSLPYTGDGLHINSPMINGLNIEQSQNILNDYLVKNHLAKRVVNYKLRNWIFSRQRYWGEPFPVLFDENNQIKIIEDLPVLLPNLDEFKPSKTGESPLANAQEWLYVEIDGKKYRRETNTMPQWAGSSWYFLAYILKNEDGSYTPLNSEEAKKRFAKWLPVDVYIGGQEHAVLHLLYARFWHRFLYDIGVVPTKEPFYKVINQGMILGENNEKMSKSKGNVINPDDIIASHGADTLRIYEMFMGPLTASLPWSPDGLDAMRKWLDRVYRLYHNLSELEVVEDVNKLNEEIIITYHTLIKNYTKAINEQAFNIAISEMMVFVNVLYKNKVINYKLLDNFLILLSCFAPHLAEELYSLNHSESVCLQKMPIYDEQKIIAQNVTIPIQINGKLKHTINVLRDTNAEQLINLALACEQVKQAIGDQPIKKQIVVVNKIINFVI.

Residues 40–51 (PYPSGKGLHVGH) carry the 'HIGH' region motif. The 'KMSKS' region signature appears at 580 to 584 (KMSKS). K583 serves as a coordination point for ATP.

Belongs to the class-I aminoacyl-tRNA synthetase family.

Its subcellular location is the cytoplasm. The enzyme catalyses tRNA(Leu) + L-leucine + ATP = L-leucyl-tRNA(Leu) + AMP + diphosphate. The chain is Leucine--tRNA ligase from Ureaplasma urealyticum serovar 10 (strain ATCC 33699 / Western).